Reading from the N-terminus, the 361-residue chain is Molybdopterin synthase catalytic subunit (361 aa).

Residues 101-102 (HR), Lys-117, and 124-126 (KKE) contribute to the substrate site.

Belongs to the MoaE family. MOCS2B subfamily. Heterotetramer; composed of 2 small (Mocs2A) and 2 large (Mocs2B) subunits.

It is found in the cytoplasm. It catalyses the reaction 2 [molybdopterin-synthase sulfur-carrier protein]-C-terminal-Gly-aminoethanethioate + cyclic pyranopterin phosphate + H2O = molybdopterin + 2 [molybdopterin-synthase sulfur-carrier protein]-C-terminal Gly-Gly + 2 H(+). Its pathway is cofactor biosynthesis; molybdopterin biosynthesis. Its function is as follows. Catalytic subunit of the molybdopterin synthase complex, a complex that catalyzes the conversion of precursor Z into molybdopterin. Acts by mediating the incorporation of 2 sulfur atoms from thiocarboxylated Mocs2A into precursor Z to generate a dithiolene group. The chain is Molybdopterin synthase catalytic subunit from Drosophila pseudoobscura pseudoobscura (Fruit fly).